Here is a 1035-residue protein sequence, read N- to C-terminus: Sialidase A (1035 aa).

Positions 1–53 (MSYFRNRDIDIERNSMNRSVQERKCRYSIRKLSVGAVSMIVGAVVFGTSPVLA) are cleaved as a signal peptide. Residues 57–112 (ASEQPLANETQLSGESSTLTDTEKSQPSSETELSGNKQEQERKDKQEEKIPRDYYA) are disordered. Polar residues predominate over residues 61–92 (PLANETQLSGESSTLTDTEKSQPSSETELSGN). Positions 94-112 (QEQERKDKQEEKIPRDYYA) are enriched in basic and acidic residues. A substrate-binding site is contributed by arginine 347. The Proton acceptor role is filled by aspartate 372. 3 BNR repeats span residues 381–392 (RRSEDNGKTWGD), 539–550 (SYSDDDGKTWSA), and 607–618 (IYSDDHGKTWHA). Glutamate 647 is a catalytic residue. A substrate-binding site is contributed by arginine 663. Residues 672–683 (ATSKDGGVTWEK) form a BNR 4 repeat. Positions 902 to 951 (GPLGTSGEEPAPTVEKPEYTGPLGTSGEEPAPTVEKPEYTGPLGTAGEEA) are disordered. Residues 1003 to 1007 (LPETG) carry the LPXTG sorting signal motif. Position 1006 is a pentaglycyl murein peptidoglycan amidated threonine (threonine 1006). Positions 1007–1035 (GNKESDLLASLGLTAFFLGLFTLGKKREQ) are cleaved as a propeptide — removed by sortase.

Belongs to the glycosyl hydrolase 33 family.

The protein localises to the secreted. It localises to the cell wall. It carries out the reaction Hydrolysis of alpha-(2-&gt;3)-, alpha-(2-&gt;6)-, alpha-(2-&gt;8)- glycosidic linkages of terminal sialic acid residues in oligosaccharides, glycoproteins, glycolipids, colominic acid and synthetic substrates.. The protein is Sialidase A (nanA) of Streptococcus pneumoniae.